Consider the following 312-residue polypeptide: Ribonuclease Z (312 aa).

Zn(2+) contacts are provided by His-63, His-65, Asp-67, His-68, His-141, Asp-212, and His-270. Asp-67 acts as the Proton acceptor in catalysis.

This sequence belongs to the RNase Z family. As to quaternary structure, homodimer. Zn(2+) serves as cofactor.

It catalyses the reaction Endonucleolytic cleavage of RNA, removing extra 3' nucleotides from tRNA precursor, generating 3' termini of tRNAs. A 3'-hydroxy group is left at the tRNA terminus and a 5'-phosphoryl group is left at the trailer molecule.. Functionally, zinc phosphodiesterase, which displays some tRNA 3'-processing endonuclease activity. Probably involved in tRNA maturation, by removing a 3'-trailer from precursor tRNA. The chain is Ribonuclease Z from Lactobacillus helveticus (strain DPC 4571).